The following is a 365-amino-acid chain: Putative 2-dehydropantoate 2-reductase (365 aa).

The protein belongs to the ketopantoate reductase family.

It carries out the reaction (R)-pantoate + NADP(+) = 2-dehydropantoate + NADPH + H(+). It functions in the pathway cofactor biosynthesis; (R)-pantothenate biosynthesis; (R)-pantoate from 3-methyl-2-oxobutanoate: step 2/2. Functionally, catalyzes the NADPH-dependent reduction of ketopantoate into pantoic acid. This is Putative 2-dehydropantoate 2-reductase (KPR) from Arabidopsis thaliana (Mouse-ear cress).